A 679-amino-acid chain; its full sequence is Methionine--tRNA ligase (679 aa).

The 'HIGH' region motif lies at 14–24 (PYANGSIHLGH). Zn(2+) is bound by residues Cys-145, Cys-148, Cys-158, and Cys-161. A 'KMSKS' region motif is present at residues 331-335 (KMSKS). Lys-334 contacts ATP. Residues 577–679 (TFAAVDLRVA…SGAKPGQRIK (103 aa)) form the tRNA-binding domain.

It belongs to the class-I aminoacyl-tRNA synthetase family. MetG type 1 subfamily. In terms of assembly, homodimer. Zn(2+) is required as a cofactor.

Its subcellular location is the cytoplasm. The catalysed reaction is tRNA(Met) + L-methionine + ATP = L-methionyl-tRNA(Met) + AMP + diphosphate. Functionally, is required not only for elongation of protein synthesis but also for the initiation of all mRNA translation through initiator tRNA(fMet) aminoacylation. This chain is Methionine--tRNA ligase, found in Pseudomonas entomophila (strain L48).